We begin with the raw amino-acid sequence, 447 residues long: Phosphoglucosamine mutase (447 aa).

The active-site Phosphoserine intermediate is S103. Positions 103, 242, 244, and 246 each coordinate Mg(2+). S103 is modified (phosphoserine).

This sequence belongs to the phosphohexose mutase family. The cofactor is Mg(2+). Activated by phosphorylation.

It catalyses the reaction alpha-D-glucosamine 1-phosphate = D-glucosamine 6-phosphate. Its function is as follows. Catalyzes the conversion of glucosamine-6-phosphate to glucosamine-1-phosphate. The protein is Phosphoglucosamine mutase of Jannaschia sp. (strain CCS1).